The chain runs to 385 residues: Probable thioesterase PNKD (385 aa).

Residues 32–58 (KASHNRTRALQSHSSPEGKEEPEPLSP) form a disordered region. Zn(2+) contacts are provided by His-172, His-174, Asp-176, His-177, His-229, Asp-253, and His-291.

This sequence belongs to the metallo-beta-lactamase superfamily. Glyoxalase II family. In terms of assembly, isoform 2 interacts with the sarcomeric proteins, MRLC2, MYOM1 and ENO3. The cofactor is Zn(2+). Undergoes cleavage at the N-terminus. In terms of tissue distribution, isoform 1 is only expressed in the brain. Isoform 2 is ubiquitously detected with highest expression in skeletal muscle and detected in myocardial myofibrils.

The protein resides in the cell membrane. The protein localises to the mitochondrion. Its subcellular location is the cytoplasm. It localises to the golgi apparatus. It is found in the endoplasmic reticulum. The catalysed reaction is a thioester + H2O = a thiol + a carboxylate + H(+). Functionally, probable thioesterase that may play a role in cellular detoxification processes; it likely acts on a yet-unknown alpha-hydroxythioester substrate. In vitro, it is able to catalyze the hydrolysis of S-D-lactoyl-glutathione to form glutathione and D-lactic acid at very low rate, though this reaction is not physiologically relevant in vivo. This Homo sapiens (Human) protein is Probable thioesterase PNKD (PNKD).